The primary structure comprises 356 residues: Nicotinate-nucleotide--dimethylbenzimidazole phosphoribosyltransferase (356 aa).

Residue Glu317 is the Proton acceptor of the active site.

The protein belongs to the CobT family. Homodimer.

It catalyses the reaction 5,6-dimethylbenzimidazole + nicotinate beta-D-ribonucleotide = alpha-ribazole 5'-phosphate + nicotinate + H(+). It participates in nucleoside biosynthesis; alpha-ribazole biosynthesis; alpha-ribazole from 5,6-dimethylbenzimidazole: step 1/2. In terms of biological role, catalyzes the synthesis of alpha-ribazole-5'-phosphate from nicotinate mononucleotide (NAMN) and 5,6-dimethylbenzimidazole (DMB). This Salmonella gallinarum (strain 287/91 / NCTC 13346) protein is Nicotinate-nucleotide--dimethylbenzimidazole phosphoribosyltransferase.